Consider the following 692-residue polypeptide: Polyribonucleotide nucleotidyltransferase (692 aa).

The Mg(2+) site is built by Asp484 and Asp490. The region spanning 551-614 (PKYFIHKISQ…ALVERVKSIT (64 aa)) is the KH domain. The 69-residue stretch at 620–688 (GAVYTGKVKT…NRGRIRLSRK (69 aa)) folds into the S1 motif domain.

This sequence belongs to the polyribonucleotide nucleotidyltransferase family. The cofactor is Mg(2+).

It is found in the cytoplasm. The catalysed reaction is RNA(n+1) + phosphate = RNA(n) + a ribonucleoside 5'-diphosphate. Its function is as follows. Involved in mRNA degradation. Catalyzes the phosphorolysis of single-stranded polyribonucleotides processively in the 3'- to 5'-direction. This is Polyribonucleotide nucleotidyltransferase from Desulfotalea psychrophila (strain LSv54 / DSM 12343).